A 183-amino-acid chain; its full sequence is Translocon-associated protein subunit beta (183 aa).

The signal sequence occupies residues 1 to 17; it reads MRLLAVVVLALLAVSQA. Residues 18 to 146 lie on the Lumenal side of the membrane; sequence EEGARLLASK…REFDRRFSPH (129 aa). N-linked (GlcNAc...) (high mannose) asparagine glycosylation is present at Asn88. An N-linked (GlcNAc...) asparagine glycan is attached at Asn104. Residues 147–167 traverse the membrane as a helical segment; the sequence is FLDWAAFGVMTLPSIGIPLLL. Topologically, residues 168–183 are cytoplasmic; that stretch reads WYSSKRKYDTPKPKKN.

This sequence belongs to the TRAP-beta family. Heterotetramer of TRAP-alpha, TRAP-beta, TRAP-delta and TRAP-gamma. Interacts with STING1.

It localises to the endoplasmic reticulum membrane. TRAP proteins are part of a complex whose function is to bind calcium to the ER membrane and thereby regulate the retention of ER resident proteins. This Mus musculus (Mouse) protein is Translocon-associated protein subunit beta (Ssr2).